Reading from the N-terminus, the 132-residue chain is Large ribosomal subunit protein uL14 (132 aa).

This sequence belongs to the universal ribosomal protein uL14 family. Part of the 50S ribosomal subunit. Forms a cluster with proteins L3 and L24e, part of which may contact the 16S rRNA in 2 intersubunit bridges.

Functionally, binds to 23S rRNA. Forms part of two intersubunit bridges in the 70S ribosome. The protein is Large ribosomal subunit protein uL14 of Methanococcus maripaludis (strain C7 / ATCC BAA-1331).